The sequence spans 743 residues: Adhesion defective protein 2 (743 aa).

Positions 1–36 are disordered; sequence MADPGLRSGVGLPSQQGQKHDLQKDQKQPHVNNADR. Residues 18–28 are compositionally biased toward basic and acidic residues; sequence QKHDLQKDQKQ. The LisH domain maps to 38–70; sequence TQSLLNSYIYDYLIKKDYCEAARAFGREAQVQT. 4 disordered regions span residues 79–127, 264–361, 379–426, and 476–692; these read NSLA…PPPP, LQSV…QYPV, RNPH…YGFS, and KERK…KSSD. Serine 89 is subject to Phosphoserine. Polar residues predominate over residues 98-114; it reads ISNNESSDENMNVNNGN. Low complexity predominate over residues 264–281; the sequence is LQSVQQQQKQHQQKKTPQ. Composition is skewed to polar residues over residues 282–297, 315–353, 390–399, 408–426, and 482–500; these read SGST…QPTT, IPSS…DTTG, PSSTLPQQQK, QQPS…YGFS, and TSAS…SSVA. The segment covering 501 to 520 has biased composition (low complexity); sequence KTKSTTPKSTDTPTEATTSP. 2 stretches are compositionally biased toward polar residues: residues 521–544 and 556–566; these read VKVS…NMPM and DHPSNYSNLIE. Residues 567 to 578 show a composition bias toward low complexity; sequence NSSTSDTNNADN. The segment covering 586–602 has biased composition (polar residues); that stretch reads WQLQQTHSSRPTPNASS. Residues 612 to 631 are compositionally biased toward low complexity; it reads PSSANSNAPTPAPTVNTTNP. The segment covering 661-670 has biased composition (polar residues); that stretch reads DNQNQSGKSN. Residues 671-688 are compositionally biased toward low complexity; the sequence is PDTSATPSAPTESTTVAT.

It belongs to the FLO8 family.

It is found in the cytoplasm. Its subcellular location is the nucleus. Functionally, probable transcriptional regulator involved in cell adhesion. The chain is Adhesion defective protein 2 (adn2) from Schizosaccharomyces pombe (strain 972 / ATCC 24843) (Fission yeast).